The following is a 1914-amino-acid chain: Autophagy-related protein 2 homolog A (1914 aa).

In terms of domain architecture, Chorein N-terminal spans 14-112 (ERVCRYLLQH…LTLQPRQGSG (99 aa)). Phosphoserine occurs at positions 764, 869, 875, and 877. The segment at 1222–1243 (DLHPPPRPPSPTEIAGQKLSES) is disordered. Phosphoserine is present on residues serine 1246, serine 1282, and serine 1290. The disordered stretch occupies residues 1299–1337 (GERSGAQAPLPPPGASSHTLGSKAKEHENEEEGDGDTLD). A compositionally biased stretch (acidic residues) spans 1327-1337 (NEEEGDGDTLD). The WIPI-interacting stretch occupies residues 1337-1383 (DSDEFCILDAPGLGIAPRDGEPIVTQLHPGPIIVHDGHFSQPLGSTD). Serine 1381 is subject to Phosphoserine. 3 disordered regions span residues 1427 to 1452 (LTGP…TQGG), 1589 to 1634 (MVPG…SSSD), and 1803 to 1822 (RSLQ…QPAD). Low complexity predominate over residues 1429 to 1446 (GPRVSPSRSSGPNRPQNS).

The protein belongs to the ATG2 family. As to quaternary structure, interacts with ATG9A (via C-terminus). Interacts with TMEM41B. Interacts with VMP1.

It localises to the preautophagosomal structure membrane. Its subcellular location is the lipid droplet. The protein resides in the endoplasmic reticulum membrane. It carries out the reaction a 1,2-diacyl-sn-glycero-3-phospho-L-serine(in) = a 1,2-diacyl-sn-glycero-3-phospho-L-serine(out). The catalysed reaction is a 1,2-diacyl-sn-glycero-3-phosphoethanolamine(in) = a 1,2-diacyl-sn-glycero-3-phosphoethanolamine(out). Its function is as follows. Lipid transfer protein involved in autophagosome assembly. Tethers the edge of the isolation membrane (IM) to the endoplasmic reticulum (ER) and mediates direct lipid transfer from ER to IM for IM expansion. Binds to the ER exit site (ERES), which is the membrane source for autophagosome formation, and extracts phospholipids from the membrane source and transfers them to ATG9 (ATG9A or ATG9B) to the IM for membrane expansion. Lipid transfer activity is enhanced by WIPI1 and WDR45/WIPI4, which promote ATG2A-association with phosphatidylinositol 3-monophosphate (PI3P)-containing membranes. Also regulates lipid droplets morphology and distribution within the cell. (Microbial infection) Mediates the intracellular lifestyle of Cryptococcus neoformans by supporting infection. This Mus musculus (Mouse) protein is Autophagy-related protein 2 homolog A.